The sequence spans 243 residues: Probable transcriptional regulatory protein LCA_1307 (243 aa).

The interval 1-21 is disordered; sequence MSGHSKWHNIQGRKNAQDAKR.

This sequence belongs to the TACO1 family.

The protein resides in the cytoplasm. The protein is Probable transcriptional regulatory protein LCA_1307 of Latilactobacillus sakei subsp. sakei (strain 23K) (Lactobacillus sakei subsp. sakei).